The sequence spans 352 residues: D-alanine--D-alanine ligase (352 aa).

One can recognise an ATP-grasp domain in the interval 133-342 (KTVFAAAGLP…FPKLVDRLIQ (210 aa)). 169-224 (DETIGYPNFVKPANLGSSVGISKVRSRLELEAALDSAASFDRRIVVEAGVVAREVE) contributes to the ATP binding site. The Mg(2+) site is built by D295, E309, and N311.

Belongs to the D-alanine--D-alanine ligase family. Requires Mg(2+) as cofactor. The cofactor is Mn(2+).

It localises to the cytoplasm. The catalysed reaction is 2 D-alanine + ATP = D-alanyl-D-alanine + ADP + phosphate + H(+). Its pathway is cell wall biogenesis; peptidoglycan biosynthesis. Functionally, cell wall formation. This is D-alanine--D-alanine ligase from Acaryochloris marina (strain MBIC 11017).